The primary structure comprises 150 residues: Large ribosomal subunit protein uL15 (150 aa).

Residues 1–51 (MKLHTLRPAKGSVKTSKRIGRGTGSGRGGTSTKGHKGAKSRSGYSSKIGFE) form a disordered region. Residues 21–31 (RGTGSGRGGTS) show a composition bias toward gly residues.

The protein belongs to the universal ribosomal protein uL15 family. In terms of assembly, part of the 50S ribosomal subunit.

Binds to the 23S rRNA. This Cytophaga hutchinsonii (strain ATCC 33406 / DSM 1761 / CIP 103989 / NBRC 15051 / NCIMB 9469 / D465) protein is Large ribosomal subunit protein uL15.